A 193-amino-acid chain; its full sequence is Flagellar transcriptional regulator FlhC (193 aa).

Residues Cys-138, Cys-141, Cys-158, and Cys-161 each contribute to the Zn(2+) site.

This sequence belongs to the FlhC family. As to quaternary structure, heterohexamer composed of two FlhC and four FlhD subunits. Each FlhC binds a FlhD dimer, forming a heterotrimer, and a hexamer assembles by dimerization of two heterotrimers. Zn(2+) serves as cofactor.

It is found in the cytoplasm. Its function is as follows. Functions in complex with FlhD as a master transcriptional regulator that regulates transcription of several flagellar and non-flagellar operons by binding to their promoter region. Activates expression of class 2 flagellar genes, including fliA, which is a flagellum-specific sigma factor that turns on the class 3 genes. Also regulates genes whose products function in a variety of physiological pathways. This Proteus mirabilis protein is Flagellar transcriptional regulator FlhC.